A 345-amino-acid chain; its full sequence is Nuclear distribution protein nudE-like 1 (345 aa).

Positions 28-190 (QSFQEARDEL…LAVRERQQEV (163 aa)) form a coiled coil. Positions 56–166 (VQAEQRNRDL…LDEKESLLVS (111 aa)) are self-association. Residues 64–189 (DLQADNQRLK…ELAVRERQQE (126 aa)) form an interaction with KATNB1 region. A required for interaction with PAFAH1B1 region spans residues 114–133 (YVRELEQANDDLERAKRATI). Residues 175-345 (RDLRQELAVR…SAPGMLPLSV (171 aa)) are interaction with CENPF. An interaction with YWHAE region spans residues 189 to 256 (EVTRKSAPSS…SARISALNIV (68 aa)). The segment at 191 to 345 (TRKSAPSSPT…SAPGMLPLSV (155 aa)) is interaction with NEFL. Positions 195–256 (APSSPTLDCE…SARISALNIV (62 aa)) are interaction with KATNA1. A Phosphoserine modification is found at S215. Residue T219 is modified to Phosphothreonine; by CDK1 and MAPK1. S231 carries the post-translational modification Phosphoserine. Positions 241-280 (TSPLTPSARISALNIVGDLLRKVGALESKLAACRNFAKDQ) are interaction with DISC1. Position 242 is a phosphoserine; by CDK1 (S242). At T245 the chain carries Phosphothreonine; by CDK1 and MAPK1. A required for localization to the centrosome and interaction with dynein, dynactin, tubulin gamma, PCM1 and PCNT region spans residues 256-291 (VGDLLRKVGALESKLAACRNFAKDQASRKSYISGNV). Residue C273 is the site of S-palmitoyl cysteine; by ZDHHC2, ZDHHC3 and ZDHHC7 attachment. The disordered stretch occupies residues 315-345 (GAVNGFDPAPPPPGLGSSRPSSAPGMLPLSV). A compositionally biased stretch (low complexity) spans 329-339 (LGSSRPSSAPG). At S344 the chain carries Phosphoserine.

It belongs to the nudE family. Self-associates. Interacts with DISC1, dynein, dynactin, tubulin gamma, KATNA1, KATNB1, microtubules, PAFAH1B1, PCM1, PCNT, and YWHAE. Interacts directly with NEFL and indirectly with NEFH. Interacts (via C-terminus) with CENPF. Interacts with ZNF365. Interacts with PLEKHM1 (via N- and C-terminus). Interacts with GTP-bound RAB9A; the interaction may lead to RAB9A-dynein motor tethering. Phosphorylated in mitosis. Can be phosphorylated by CDK1, CDK5 and MAPK1. Phosphorylation by CDK5 promotes interaction with KATNA1 and YWHAE. Post-translationally, palmitoylation at Cys-273 reduces affinity for dynein.

Its subcellular location is the cytoplasm. It localises to the cytoskeleton. It is found in the microtubule organizing center. The protein localises to the centrosome. The protein resides in the chromosome. Its subcellular location is the centromere. It localises to the kinetochore. It is found in the spindle. Functionally, required for organization of the cellular microtubule array and microtubule anchoring at the centrosome. May regulate microtubule organization at least in part by targeting the microtubule severing protein KATNA1 to the centrosome. Also positively regulates the activity of the minus-end directed microtubule motor protein dynein. May enhance dynein-mediated microtubule sliding by targeting dynein to the microtubule plus ends. Required for several dynein- and microtubule-dependent processes such as the maintenance of Golgi integrity, the centripetal motion of secretory vesicles and the coupling of the nucleus and centrosome. Also required during brain development for the migration of newly formed neurons from the ventricular/subventricular zone toward the cortical plate. Plays a role, together with DISC1, in the regulation of neurite outgrowth. Required for mitosis in some cell types but appears to be dispensible for mitosis in cortical neuronal progenitors, which instead requires NDE1. Facilitates the polymerization of neurofilaments from the individual subunits NEFH and NEFL. Positively regulates lysosome peripheral distribution and ruffled border formation in osteoclasts. Plays a role, together with DISC1, in the regulation of neurite outgrowth. May act as a RAB9A/B effector that tethers RAB9-associated late endosomes to the dynein motor for their retrograde transport to the trans-Golgi network. This is Nuclear distribution protein nudE-like 1 (NDEL1) from Pongo abelii (Sumatran orangutan).